The primary structure comprises 405 residues: Corticosteroid-binding globulin (405 aa).

The N-terminal stretch at 1–22 is a signal peptide; it reads MPLLLYTCLLWLSTSGLWTVQA. 4 N-linked (GlcNAc...) asparagine glycosylation sites follow: Asn-26, Asn-31, Asn-96, and Asn-260. Residue Asn-286 coordinates cortisol. N-linked (GlcNAc...) asparagine glycans are attached at residues Asn-330 and Asn-369. Trp-393 contacts cortisol.

This sequence belongs to the serpin family. As to expression, expressed by the liver; secreted in plasma.

It localises to the secreted. Major transport protein for glucocorticoids and progestins in the blood of almost all vertebrate species. This Pongo abelii (Sumatran orangutan) protein is Corticosteroid-binding globulin (SERPINA6).